A 279-amino-acid polypeptide reads, in one-letter code: RxLR effector protein Avh331 (279 aa).

An N-terminal signal peptide occupies residues Met-1–Ala-20. The RxLR-dEER motif lies at Arg-86–Arg-106. Asn-100 carries an N-linked (GlcNAc...) asparagine glycan. Positions Ala-129–Leu-147 are W1 motif. A Y1 motif region spans residues Gly-153–Asp-174. Residues Ser-178–Ala-208 are l motif. A W2 motif region spans residues Gln-222–Val-240. Residues Pro-250 to Lys-271 are Y2 motif.

It belongs to the RxLR effector family.

It localises to the secreted. It is found in the host cell. Its function is as follows. Effector that suppresses the host mitogen-activated protein kinase (MAPK)-based plant defense activated by the Phytophthora elicitor to promote colonization of the Phytophthora pathogen. Neither directly inhibits MAPK kinase activity nor interacts with MAPK proteins but acts downstream by suppressing transcriptional activation of resistance marker genes such as FRK1, WRKY22 and WRKY29. Confers avirulence in the presence of resistance protein Rps1k in host. In Phytophthora sojae (strain P6497) (Soybean stem and root rot agent), this protein is RxLR effector protein Avh331.